Reading from the N-terminus, the 398-residue chain is ATP-dependent RNA helicase eIF4A (398 aa).

A Q motif motif is present at residues 25 to 53 (DSFDSMELKPELLRGIYAYGFERPSAIQQ). The Helicase ATP-binding domain occupies 56-226 (ILPIIKGNDV…TKFMRDPVRI (171 aa)). 69–76 (AQSGTGKT) contacts ATP. Positions 174–177 (DEAD) match the DEAD box motif. One can recognise a Helicase C-terminal domain in the interval 237 to 398 (GIKQFYIAVE…EMPMNVADLI (162 aa)).

Belongs to the DEAD box helicase family. eIF4A subfamily. Component of the eIF4F complex, which composition varies with external and internal environmental conditions. It is composed of at least eIF4A, eIF4E and eIF4G.

It localises to the cytoplasm. It carries out the reaction ATP + H2O = ADP + phosphate + H(+). Functionally, ATP-dependent RNA helicase which is a subunit of the eIF4F complex involved in cap recognition and is required for mRNA binding to ribosome. In the current model of translation initiation, eIF4A unwinds RNA secondary structures in the 5'-UTR of mRNAs which is necessary to allow efficient binding of the small ribosomal subunit, and subsequent scanning for the initiator codon. This Neosartorya fischeri (strain ATCC 1020 / DSM 3700 / CBS 544.65 / FGSC A1164 / JCM 1740 / NRRL 181 / WB 181) (Aspergillus fischerianus) protein is ATP-dependent RNA helicase eIF4A (tif1).